Reading from the N-terminus, the 656-residue chain is Translation factor GUF1 homolog, mitochondrial (656 aa).

The transit peptide at 1–29 (MLAVRRRGLRVLAVAPLRVRGLATTSTEF) directs the protein to the mitochondrion. A tr-type G domain is found at 54-238 (ERIRNFSIVA…AVVERLPPPV (185 aa)). Residues 63–70 (AHIDHGKS), 131–135 (DTPGH), and 185–188 (TKID) each bind GTP.

This sequence belongs to the TRAFAC class translation factor GTPase superfamily. Classic translation factor GTPase family. LepA subfamily.

Its subcellular location is the mitochondrion inner membrane. It carries out the reaction GTP + H2O = GDP + phosphate + H(+). Functionally, promotes mitochondrial protein synthesis. May act as a fidelity factor of the translation reaction, by catalyzing a one-codon backward translocation of tRNAs on improperly translocated ribosomes. Binds to mitochondrial ribosomes in a GTP-dependent manner. This is Translation factor GUF1 homolog, mitochondrial from Phytophthora infestans (strain T30-4) (Potato late blight agent).